The chain runs to 463 residues: Phosphoglycerate transporter protein (463 aa).

Residues 1 to 29 (MLTILKTGQSAHKVPPEKVQATYGRYRIQ) lie on the Cytoplasmic side of the membrane. The next 12 membrane-spanning stretches (helical) occupy residues 30–50 (ALLS…NFTL), 59–79 (LDLS…AYGI), 106–126 (IVNV…LVVF), 127–147 (NGLF…NWFP), 160–180 (ISHN…FAIL), 188–208 (ASYI…LVLG), 267–287 (VFVY…LLTV), 297–317 (VAFL…GWLS), 326–346 (MPLA…YWKS), 349–369 (LLMV…PQFL), 391–411 (GFMS…VMVD), and 413–433 (LGWY…ILFC).

Belongs to the major facilitator superfamily. Organophosphate:Pi antiporter (OPA) (TC 2.A.1.4) family.

It localises to the cell inner membrane. Functionally, the phosphoglycerate transporter protein is a part of the PGT transport system. It is the membrane bound transporter for phosphoglycerate into salmonella. This is Phosphoglycerate transporter protein (pgtP) from Salmonella typhimurium (strain LT2 / SGSC1412 / ATCC 700720).